The sequence spans 221 residues: Putative endonuclease segB (221 aa).

In terms of domain architecture, GIY-YIG spans 1–84 (MFYYTYKITN…FLNRPDVYNL (84 aa)).

This sequence to endonucleases of group I introns of fungi and phage. Requires Mg(2+) as cofactor.

Its function is as follows. Probably involved in the movement of the endonuclease-encoding DNA. This chain is Putative endonuclease segB (segB), found in Enterobacteria phage T4 (Bacteriophage T4).